A 221-amino-acid polypeptide reads, in one-letter code: Probable transaldolase (221 aa).

K83 serves as the catalytic Schiff-base intermediate with substrate.

This sequence belongs to the transaldolase family. Type 3B subfamily.

Its subcellular location is the cytoplasm. The enzyme catalyses D-sedoheptulose 7-phosphate + D-glyceraldehyde 3-phosphate = D-erythrose 4-phosphate + beta-D-fructose 6-phosphate. The protein operates within carbohydrate degradation; pentose phosphate pathway; D-glyceraldehyde 3-phosphate and beta-D-fructose 6-phosphate from D-ribose 5-phosphate and D-xylulose 5-phosphate (non-oxidative stage): step 2/3. Its function is as follows. Transaldolase is important for the balance of metabolites in the pentose-phosphate pathway. In Herpetosiphon aurantiacus (strain ATCC 23779 / DSM 785 / 114-95), this protein is Probable transaldolase.